The primary structure comprises 308 residues: MNWLEIAVHVCPEGIDMVSNIFDELGAGGVVIEDPALINRYIEANIWDHYEFPPEVLNRPQPIVKAYLPEGPNLENKLVLLQERLTGLPLDAVPTFERRQVAEEDWATAWMKYYKPVEIGQKLAVKPSWEDYVPEDGRIVLEMDPGMAFGCGNHPTTTMCMEYLEGIIQGGESVADVGTGTGILAITSAKLGAARVLAVDLDEVAVKVSQENVERNGVQDIVEVFHGNLLDKVESKVDVVIANIVANVIMILAPDVPRILKHGGYFITSGIIQFRAEEVRQKLEQTGFKILGRKEDGEWVSYLCILEG.

S-adenosyl-L-methionine is bound by residues Thr-157, Gly-178, Asp-200, and Asn-243.

This sequence belongs to the methyltransferase superfamily. PrmA family.

The protein localises to the cytoplasm. It carries out the reaction L-lysyl-[protein] + 3 S-adenosyl-L-methionine = N(6),N(6),N(6)-trimethyl-L-lysyl-[protein] + 3 S-adenosyl-L-homocysteine + 3 H(+). Methylates ribosomal protein L11. The protein is Ribosomal protein L11 methyltransferase of Desulforamulus reducens (strain ATCC BAA-1160 / DSM 100696 / MI-1) (Desulfotomaculum reducens).